We begin with the raw amino-acid sequence, 337 residues long: Inositol 2-dehydrogenase (337 aa).

This sequence belongs to the Gfo/Idh/MocA family. Homotetramer.

It carries out the reaction myo-inositol + NAD(+) = scyllo-inosose + NADH + H(+). In terms of biological role, involved in the oxidation of myo-inositol (MI) to 2-keto-myo-inositol (2KMI or 2-inosose). This chain is Inositol 2-dehydrogenase, found in Burkholderia vietnamiensis (strain G4 / LMG 22486) (Burkholderia cepacia (strain R1808)).